The chain runs to 570 residues: Formate--tetrahydrofolate ligase (570 aa).

65-72 is a binding site for ATP; that stretch reads TPFGEGKT.

This sequence belongs to the formate--tetrahydrofolate ligase family.

It carries out the reaction (6S)-5,6,7,8-tetrahydrofolate + formate + ATP = (6R)-10-formyltetrahydrofolate + ADP + phosphate. It participates in one-carbon metabolism; tetrahydrofolate interconversion. This chain is Formate--tetrahydrofolate ligase, found in Shewanella halifaxensis (strain HAW-EB4).